Reading from the N-terminus, the 352-residue chain is MEGLKDKTLQELEEMQNDPEAIARLALESPEVQDLQLEREMALATNRSLAEQNLEFQGPLEISRSNLSDKYQELRKLVERCQEQKAKLEKFSSALQPGTLLDLLQIEGMKIEEESEAMAEKFLEGEVPLETFLESFSSMRTLLHLRRVRVEKLQDVVRRPRALPELAGDVPPKRPPPPRPVPQATPPETEEQPPQPSVVTPYPLPYSPSPGLPVGPTAQGALQPAPFPVVAQPSSYGGPLGPYPSPHPGPRAMVGYSWSPQRSGPPQPGYPTAPTSTSGPGYPLVGGRTPGPGYPQQSPYLPSGNKPPYPTQPQLPGFPGQPQPPVPPQPPYPPGTTPSYGFHPPGPAWPRY.

Ser29 is subject to Phosphoserine. The 90-residue stretch at 78 to 167 (VERCQEQKAK…RRPRALPELA (90 aa)) folds into the VPS37 C-terminal domain. Residues 162–352 (ALPELAGDVP…HPPGPAWPRY (191 aa)) form a disordered region. Pro residues-rich tracts occupy residues 173 to 185 (KRPP…PQAT), 202 to 213 (YPLPYSPSPGLP), and 319 to 336 (PGQP…PPGT).

Belongs to the VPS37 family. As to quaternary structure, component of the ESCRT-I complex (endosomal sorting complex required for transport I) which consists of TSG101, VPS28, a VPS37 protein (VPS37A to -D) and MVB12A or MVB12B in a 1:1:1:1 stoichiometry. Interacts with TSG101, VPS28, MVB12A and MVB12B. Component of the ESCRT-I complex (endosomal sorting complex required for transport I) which consists of TSG101, VPS28, a VPS37 protein (VPS37A to -D) and UBAP1 in a 1:1:1:1 stoichiometry. Interacts with HGS and STAM2. Interacts with CEP55. In terms of processing, phosphorylated by TBK1.

It is found in the late endosome membrane. Component of the ESCRT-I complex, a regulator of vesicular trafficking process. Required for the sorting of endocytic ubiquitinated cargos into multivesicular bodies. May be involved in cell growth and differentiation. The protein is Vacuolar protein sorting-associated protein 37C (Vps37c) of Mus musculus (Mouse).